A 449-amino-acid polypeptide reads, in one-letter code: Sensor protein QseC (449 aa).

The Cytoplasmic portion of the chain corresponds to 1 to 12 (MKLTQRLSLRVR). A helical membrane pass occupies residues 13–33 (LTLIFLILVSITWAISSFVAW). Topologically, residues 34–161 (RKTTDNVDEL…REDMALAIVA (128 aa)) are periplasmic. Residues 162-182 (AQLTPWLIALPFMLLILLLLL) traverse the membrane as a helical segment. Residues 183-235 (HRELRPLKKLAQALRFRSPESETPLDAKGVPSEVRPLVEALNQLFSRIHSMMV) form the HAMP domain. Over 183 to 449 (HRELRPLKKL…EGGFEAVVSW (267 aa)) the chain is Cytoplasmic. The Histidine kinase domain occupies 243 to 449 (DAAHELRSPL…EGGFEAVVSW (207 aa)). H246 bears the Phosphohistidine; by autocatalysis mark.

Its subcellular location is the cell inner membrane. The enzyme catalyses ATP + protein L-histidine = ADP + protein N-phospho-L-histidine.. Functionally, member of a two-component regulatory system QseB/QseC. Activates the flagella regulon by activating transcription of FlhDC. May activate QseB by phosphorylation. The chain is Sensor protein QseC (qseC) from Salmonella typhimurium (strain LT2 / SGSC1412 / ATCC 700720).